Here is a 273-residue protein sequence, read N- to C-terminus: Putative pyruvate, phosphate dikinase regulatory protein 2 (273 aa).

151 to 158 contacts ADP; sequence GISRTSKT.

This sequence belongs to the pyruvate, phosphate/water dikinase regulatory protein family. PDRP subfamily.

The catalysed reaction is N(tele)-phospho-L-histidyl/L-threonyl-[pyruvate, phosphate dikinase] + ADP = N(tele)-phospho-L-histidyl/O-phospho-L-threonyl-[pyruvate, phosphate dikinase] + AMP + H(+). The enzyme catalyses N(tele)-phospho-L-histidyl/O-phospho-L-threonyl-[pyruvate, phosphate dikinase] + phosphate + H(+) = N(tele)-phospho-L-histidyl/L-threonyl-[pyruvate, phosphate dikinase] + diphosphate. In terms of biological role, bifunctional serine/threonine kinase and phosphorylase involved in the regulation of the pyruvate, phosphate dikinase (PPDK) by catalyzing its phosphorylation/dephosphorylation. This Staphylococcus saprophyticus subsp. saprophyticus (strain ATCC 15305 / DSM 20229 / NCIMB 8711 / NCTC 7292 / S-41) protein is Putative pyruvate, phosphate dikinase regulatory protein 2.